An 842-amino-acid chain; its full sequence is Xyloglucanase Xgh74A (842 aa).

Residues 1 to 32 (MVKKFTSKIKAAVFAAVVAATAIFGPAISSQA) form the signal peptide. The active-site Nucleophile is the Asp-70. BNR repeat units follow at residues 134-144 (RSTDRGETWEK), 185-196 (WRSTDYGVTWSK), 252-262 (YRSTDGGVTWK), and 358-368 (FRSTDGGATWK). Asp-480 serves as the catalytic Proton donor. BNR repeat units follow at residues 533–541 (FSYDGGRNW), 577–586 (VTTDNGNSWK), 616–626 (YISTDGGLTFT), 660–671 (WRSTDGGYTFEK), and 708–718 (FRSDDAGKTWV). Positions 771–841 (DKGLVGDLNG…LLQAIPELPK (71 aa)) constitute a Dockerin domain.

It belongs to the glycosyl hydrolase 74 family.

Hydrolyzes the glucosidic bonds of unbranched Glc residues in tamarind seed xyloglucan, producing XXXG, XLXG, XXLG and XLLG. Has low activity on carboxymethylcellulose, lichenan,hydroxyethylcellulose and glucuronoxylan, and no activity on xylan, polygalaturonic acid, wheat arabinoxylan, rhamnogalacturan, curdlan, laminarin, galactomannan, galactan, arabinan and pachyman or amorphous cellulose. The sequence is that of Xyloglucanase Xgh74A from Acetivibrio thermocellus (Hungateiclostridium thermocellum).